We begin with the raw amino-acid sequence, 310 residues long: Biotin synthase (310 aa).

The region spanning 34–262 (GRVQLCALVN…TAQIRLSAGR (229 aa)) is the Radical SAM core domain. Residues Cys-49, Cys-53, and Cys-56 each contribute to the [4Fe-4S] cluster site. Residues Cys-93, Cys-125, Cys-185, and Arg-257 each coordinate [2Fe-2S] cluster.

This sequence belongs to the radical SAM superfamily. Biotin synthase family. As to quaternary structure, homodimer. Requires [4Fe-4S] cluster as cofactor. [2Fe-2S] cluster serves as cofactor.

It carries out the reaction (4R,5S)-dethiobiotin + (sulfur carrier)-SH + 2 reduced [2Fe-2S]-[ferredoxin] + 2 S-adenosyl-L-methionine = (sulfur carrier)-H + biotin + 2 5'-deoxyadenosine + 2 L-methionine + 2 oxidized [2Fe-2S]-[ferredoxin]. Its pathway is cofactor biosynthesis; biotin biosynthesis; biotin from 7,8-diaminononanoate: step 2/2. In terms of biological role, catalyzes the conversion of dethiobiotin (DTB) to biotin by the insertion of a sulfur atom into dethiobiotin via a radical-based mechanism. This Synechococcus sp. (strain JA-3-3Ab) (Cyanobacteria bacterium Yellowstone A-Prime) protein is Biotin synthase.